An 868-amino-acid chain; its full sequence is LPS-assembly protein LptD (868 aa).

Positions 1-24 are cleaved as a signal peptide; the sequence is MLKGIHKYLLMCFGTVLFTVQANA.

Belongs to the LptD family. As to quaternary structure, component of the lipopolysaccharide transport and assembly complex. Interacts with LptE and LptA.

It localises to the cell outer membrane. Its function is as follows. Together with LptE, is involved in the assembly of lipopolysaccharide (LPS) at the surface of the outer membrane. The polypeptide is LPS-assembly protein LptD (Francisella tularensis subsp. holarctica (strain LVS)).